We begin with the raw amino-acid sequence, 58 residues long: Large ribosomal subunit protein uL30 (58 aa).

This sequence belongs to the universal ribosomal protein uL30 family. As to quaternary structure, part of the 50S ribosomal subunit.

This is Large ribosomal subunit protein uL30 from Phocaeicola vulgatus (strain ATCC 8482 / DSM 1447 / JCM 5826 / CCUG 4940 / NBRC 14291 / NCTC 11154) (Bacteroides vulgatus).